The chain runs to 1131 residues: Phytochrome a (1131 aa).

Positions 1–23 (MSSSRPAHSSSSSSRTRQSSQAR) are enriched in low complexity. Residues 1 to 26 (MSSSRPAHSSSSSSRTRQSSQARILA) form a disordered region. In terms of domain architecture, GAF spans 219-404 (SMEALCNTVV…VFAVHVNKEF (186 aa)). A phytochromobilin-binding site is contributed by cysteine 324. 2 PAS domains span residues 620–690 (VTSE…LQGK) and 750–834 (VEGD…LAGE). Positions 904-1124 (YMRHAINKPL…TFILTAELAA (221 aa)) constitute a Histidine kinase domain.

This sequence belongs to the phytochrome family. As to quaternary structure, homodimer. Post-translationally, contains one covalently linked phytochromobilin chromophore.

In terms of biological role, regulatory photoreceptor which exists in two forms that are reversibly interconvertible by light: the Pr form that absorbs maximally in the red region of the spectrum and the Pfr form that absorbs maximally in the far-red region. Photoconversion of Pr to Pfr induces an array of morphogenic responses, whereas reconversion of Pfr to Pr cancels the induction of those responses. Pfr controls the expression of a number of nuclear genes including those encoding the small subunit of ribulose-bisphosphate carboxylase, chlorophyll A/B binding protein, protochlorophyllide reductase, rRNA, etc. It also controls the expression of its own gene(s) in a negative feedback fashion. The chain is Phytochrome a (PHYA) from Sorghum bicolor (Sorghum).